Consider the following 614-residue polypeptide: UvrABC system protein C (614 aa).

A GIY-YIG domain is found at 20–98 (TAPGVYRMYA…IKSLSPRYNV (79 aa)). In terms of domain architecture, UVR spans 207 to 242 (DELTRELGEQMQAASEALEFEQAARLRDLISSLRSM).

This sequence belongs to the UvrC family. In terms of assembly, interacts with UvrB in an incision complex.

It is found in the cytoplasm. Its function is as follows. The UvrABC repair system catalyzes the recognition and processing of DNA lesions. UvrC both incises the 5' and 3' sides of the lesion. The N-terminal half is responsible for the 3' incision and the C-terminal half is responsible for the 5' incision. This chain is UvrABC system protein C, found in Stenotrophomonas maltophilia (strain K279a).